We begin with the raw amino-acid sequence, 59 residues long: UPF0434 protein Shew185_1670 (59 aa).

Belongs to the UPF0434 family.

This Shewanella baltica (strain OS185) protein is UPF0434 protein Shew185_1670.